The chain runs to 52 residues: Mitogenic lectin alpha chain (52 aa).

It belongs to the leguminous lectin family. In terms of assembly, tetramer of two alpha and two beta chains.

The sequence is that of Mitogenic lectin alpha chain from Vicia sativa (Spring vetch).